The primary structure comprises 86 residues: Toxin Tpa4 (86 aa).

An N-terminal signal peptide occupies residues 1–19 (MNYFVLIAVACLLTAGTES). Residues 21–82 (KDGYPLEYDN…EPIKTSGRCR (62 aa)) enclose the LCN-type CS-alpha/beta domain. Disulfide bonds link Cys-31-Cys-81, Cys-35-Cys-57, Cys-43-Cys-64, and Cys-47-Cys-66. Pro-83 carries the post-translational modification Proline amide.

The protein belongs to the long (4 C-C) scorpion toxin superfamily. Sodium channel inhibitor family. Alpha subfamily. As to expression, expressed by the venom gland.

It is found in the secreted. In terms of biological role, alpha toxins bind voltage-independently at site-3 of sodium channels (Nav) and inhibit the inactivation of the activated channels, thereby blocking neuronal transmission. The sequence is that of Toxin Tpa4 from Tityus pachyurus (Colombian scorpion).